Consider the following 328-residue polypeptide: Phosphate acetyltransferase (328 aa).

The protein belongs to the phosphate acetyltransferase and butyryltransferase family.

It is found in the cytoplasm. It carries out the reaction acetyl-CoA + phosphate = acetyl phosphate + CoA. It functions in the pathway metabolic intermediate biosynthesis; acetyl-CoA biosynthesis; acetyl-CoA from acetate: step 2/2. The polypeptide is Phosphate acetyltransferase (pta) (Staphylococcus aureus (strain MSSA476)).